Consider the following 369-residue polypeptide: Saccharopine dehydrogenase [NAD(+), L-lysine-forming] (369 aa).

L-saccharopine contacts are provided by arginine 19 and lysine 78. Lysine 78 functions as the Proton acceptor in the catalytic mechanism. Histidine 96 functions as the Proton donor in the catalytic mechanism. Residue glutamine 101 coordinates L-saccharopine. Residue arginine 130 coordinates NAD(+). The L-saccharopine site is built by arginine 131 and phenylalanine 135. NAD(+) is bound by residues 203–204 (GR), aspartate 227, threonine 231, tyrosine 251, and valine 278. Cysteine 205 and cysteine 249 form a disulfide bridge. 279–281 (SAD) contributes to the L-saccharopine binding site. Position 318 to 321 (318 to 321 (IDHL)) interacts with NAD(+).

This sequence belongs to the AlaDH/PNT family. As to quaternary structure, monomer.

It catalyses the reaction L-saccharopine + NAD(+) + H2O = L-lysine + 2-oxoglutarate + NADH + H(+). It functions in the pathway amino-acid biosynthesis; L-lysine biosynthesis via AAA pathway; L-lysine from L-alpha-aminoadipate (fungal route): step 3/3. Functionally, catalyzes the NAD(+)-dependent cleavage of saccharopine to L-lysine and 2-oxoglutarate, the final step in the alpha-aminoadipate (AAA) pathway for lysin biosynthesis. The sequence is that of Saccharopine dehydrogenase [NAD(+), L-lysine-forming] from Yarrowia lipolytica (strain CLIB 122 / E 150) (Yeast).